Consider the following 122-residue polypeptide: Early nodulin-10 (122 aa).

An N-terminal signal peptide occupies residues 1–36; that stretch reads MTCTLKSPPKMASFFLSSLVLMFIAALILLPQGLAA. Repeat copies occupy residues 45–49, 51–55, 58–62, 68–72, 77–81, 82–86, 88–92, 99–103, 106–110, and 113–117. The 10 X 5 AA approximate repeats of P-P-X-X-X stretch occupies residues 45–117; sequence PPDSELPPYR…FYKQAPPSQK (73 aa). The tract at residues 90–122 is disordered; the sequence is TYKPSKKRLPPPFQKLPPFYKQAPPSQKLPRVN.

In terms of tissue distribution, root nodules. In early nodules, expressed only in the interior of the developing nodule with no expression in other nodule tissues, including meristem. In slightly older nodules, expressed in almost all cells of the central zone. In more mature nodules, expression is restricted to the invasion zone.

This chain is Early nodulin-10 (ENOD10), found in Medicago sativa (Alfalfa).